Reading from the N-terminus, the 287-residue chain is ATP synthase gamma chain (287 aa).

This sequence belongs to the ATPase gamma chain family. As to quaternary structure, F-type ATPases have 2 components, CF(1) - the catalytic core - and CF(0) - the membrane proton channel. CF(1) has five subunits: alpha(3), beta(3), gamma(1), delta(1), epsilon(1). CF(0) has three main subunits: a, b and c.

The protein resides in the cell inner membrane. Functionally, produces ATP from ADP in the presence of a proton gradient across the membrane. The gamma chain is believed to be important in regulating ATPase activity and the flow of protons through the CF(0) complex. The chain is ATP synthase gamma chain from Klebsiella pneumoniae (strain 342).